A 548-amino-acid chain; its full sequence is Synaptic vesicle 2-related protein (548 aa).

The Cytoplasmic portion of the chain corresponds to 1–87 (MEEDLFQLRQ…GFGKFQWKLS (87 aa)). 2 positions are modified to phosphoserine: S25 and S31. A helical transmembrane segment spans residues 88-108 (VLTGLAWMADAMEMMILSILA). Residues 109–122 (PQLHCEWRLPSWQV) are Vesicular-facing. Residues 123–143 (ALLTSVVFVGMMSSSTLWGNI) form a helical membrane-spanning segment. Over 144–156 (SDQYGRKTGLKIS) the chain is Cytoplasmic. A helical membrane pass occupies residues 157 to 177 (VLWTLYYGILSAFAPVYSWIL). At 178–180 (VLR) the chain is on the vesicular side. Residues 181-201 (GLVGFGIGGVPQSVTLYAEFL) form a helical membrane-spanning segment. Residues 202–209 (PMKARAKC) are Cytoplasmic-facing. A helical transmembrane segment spans residues 210–230 (ILLIEVFWAIGTVFEVVLAVF). Over 231–238 (VMPSLGWR) the chain is Vesicular. The chain crosses the membrane as a helical span at residues 239 to 259 (WLLILSAVPLLLFAVLCFWLP). Residues 260 to 316 (ESARYDVLSGNQEKAIATLKRIATENGAPMPLGKLIISRQEDRGKMRDLFTPHFRWT) are Cytoplasmic-facing. A helical membrane pass occupies residues 317-337 (TLLLWFIWFSNAFSYYGLVLL). Residues 338 to 373 (TTELFQAGDVCSISSRKKAVEAKCSLACEYLSEEDY) are Vesicular-facing. The helical transmembrane segment at 374–394 (MDLLWTTLSEFPGVLVTLWII) threads the bilayer. The Cytoplasmic portion of the chain corresponds to 395 to 401 (DRLGRKK). A helical membrane pass occupies residues 402–422 (TMALCFVVFSFCSLLLFICVG). The Vesicular portion of the chain corresponds to 423-425 (RNM). Residues 426–446 (LTLLLFIARAFISGGFQAAYV) traverse the membrane as a helical segment. At 447–457 (YTPEVYPTATR) the chain is on the cytoplasmic side. The helical transmembrane segment at 458–478 (ALGLGTCSGMARVGALITPFI) threads the bilayer. The Vesicular portion of the chain corresponds to 479–489 (AQVMLESSVYL). Residues 490–510 (TLAVYSGCCLLAALASCFLPI) traverse the membrane as a helical segment. At 511-548 (ETKGRGLQESSHREWGQEMVGRGAHGTGVARSNSGSQE) the chain is on the cytoplasmic side. The tract at residues 528-548 (EMVGRGAHGTGVARSNSGSQE) is disordered. The residue at position 542 (S542) is a Phosphoserine.

This sequence belongs to the major facilitator superfamily. Detected in brain and adrenal medulla.

The protein resides in the cytoplasmic vesicle. It is found in the secretory vesicle. The protein localises to the synaptic vesicle membrane. In Bos taurus (Bovine), this protein is Synaptic vesicle 2-related protein (SVOP).